A 93-amino-acid polypeptide reads, in one-letter code: Acylphosphatase (93 aa).

In terms of domain architecture, Acylphosphatase-like spans 5–93 (AKQIVVRGRV…PNFRGFQVTG (89 aa)). Residues R20 and N38 contribute to the active site.

This sequence belongs to the acylphosphatase family.

It catalyses the reaction an acyl phosphate + H2O = a carboxylate + phosphate + H(+). In Lacticaseibacillus paracasei (strain ATCC 334 / BCRC 17002 / CCUG 31169 / CIP 107868 / KCTC 3260 / NRRL B-441) (Lactobacillus paracasei), this protein is Acylphosphatase (acyP).